Reading from the N-terminus, the 280-residue chain is Endochitinase A (280 aa).

An N-terminal signal peptide occupies residues 1-25 (MANAPRILALGLLALLCAAAGPAAA). Positions 26 to 60 (QNCGCQPNFCCSKFGYCGTTDAYCGDGCQSGPCRS) constitute a Chitin-binding type-1 domain. Cystine bridges form between C28-C36, C30-C42, C35-C49, and C53-C58. Residues 61-77 (GGGGGGGGGGGGGGSGG) form a hinge region (poly-Gly) region. Residues 78 to 280 (ANVANVVTDA…RVDPGPNLTC (203 aa)) form a catalytic region. The cysteines at positions 100 and 149 are disulfide-linked. The Proton donor role is filled by E144. N155 is a glycosylation site (N-linked (GlcNAc...) asparagine). Intrachain disulfides connect C161–C170 and C248–C280. N277 carries N-linked (GlcNAc...) asparagine glycosylation.

It belongs to the glycosyl hydrolase 19 family. Chitinase class IV subfamily.

The protein localises to the secreted. It carries out the reaction Random endo-hydrolysis of N-acetyl-beta-D-glucosaminide (1-&gt;4)-beta-linkages in chitin and chitodextrins.. With respect to regulation, inactivated by l-ethyl-3-(3-dimethylaminopropyl)carbodiimide (EDC) in the absence of exogenous nucleophiles (e.g. GlcNAc4, GlcNAc3 and GlcNAc2). Not inhibited by tetra-N-acetylchitopentaose or modified chitotetraose substrate TMG-chitotriomycin-pMP, containing a free, non-acetylated glucosaminyl residue or a N-trimethylamino glucosamine (TMG) residue at the non-reducing terminus, respectively. Its function is as follows. Defense against chitin-containing fungal pathogens. Hydrolyzes glycol chitin and tetra-N-acetylchitotetraose in vitro. Its action is countered by fungal polyglycine hydrolases and fungalysin, that cleave the chitin-binding domain from the protein. This Zea mays (Maize) protein is Endochitinase A.